A 187-amino-acid polypeptide reads, in one-letter code: Early nodulin-55-2 (187 aa).

The N-terminal stretch at 1–26 (MASCLPNASPFLVMLAMCLLISTSEA) is a signal peptide. The Phytocyanin domain maps to 27 to 132 (EKYVVGGSEK…GLKLAVLVIS (106 aa)). N-linked (GlcNAc...) asparagine glycosylation is found at Asn-78, Asn-116, and Asn-134. A disulfide bond links Cys-85 and Cys-120. Residues 138-167 (KNLLSPSPSPSPPPSSLLSPSPSPLPNNQG) are disordered. Residues 144-162 (SPSPSPPPSSLLSPSPSPL) show a composition bias toward pro residues.

This sequence belongs to the early nodulin-like (ENODL) family.

Its subcellular location is the symbiosome. The protein localises to the peribacteroid membrane. Functionally, may act as a carbohydrate transporter. The sequence is that of Early nodulin-55-2 from Glycine max (Soybean).